The primary structure comprises 259 residues: Short-chain dehydrogenase reductase 5 (259 aa).

12 to 36 (IITGGASGIGAEAARLFTDHGAKVV) is a binding site for NAD(+). Ser144 serves as a coordination point for substrate. Tyr157 (proton acceptor) is an active-site residue.

It belongs to the short-chain dehydrogenases/reductases (SDR) family.

In Arabidopsis thaliana (Mouse-ear cress), this protein is Short-chain dehydrogenase reductase 5 (SDR5).